We begin with the raw amino-acid sequence, 235 residues long: Large ribosomal subunit protein uL1 (235 aa).

This sequence belongs to the universal ribosomal protein uL1 family. In terms of assembly, part of the 50S ribosomal subunit.

Binds directly to 23S rRNA. The L1 stalk is quite mobile in the ribosome, and is involved in E site tRNA release. Functionally, protein L1 is also a translational repressor protein, it controls the translation of the L11 operon by binding to its mRNA. This is Large ribosomal subunit protein uL1 from Lawsonia intracellularis (strain PHE/MN1-00).